The chain runs to 161 residues: Peptidyl-prolyl cis-trans isomerase 10 (161 aa).

A PPIase cyclophilin-type domain is found at 1 to 153 (MSVTLHTTSG…VQQKIQNVTI (153 aa)).

Belongs to the cyclophilin-type PPIase family. PPIL3 subfamily.

It carries out the reaction [protein]-peptidylproline (omega=180) = [protein]-peptidylproline (omega=0). Functionally, PPIases accelerate the folding of proteins. It catalyzes the cis-trans isomerization of proline imidic peptide bonds in oligopeptides. The protein is Peptidyl-prolyl cis-trans isomerase 10 (cyn-10) of Caenorhabditis elegans.